Reading from the N-terminus, the 512-residue chain is Delta(14)-sterol reductase (512 aa).

A run of 8 helical transmembrane segments spans residues I27–C47, A100–A120, A140–P160, Y172–L192, S242–A262, W278–S298, F324–A344, and A353–F373. Residues K380, R384, L407, W412, and N419–Y420 each bind NADP(+). The next 2 membrane-spanning stretches (helical) occupy residues I418–G438 and M458–I478. Residues D484, C488–Y492, and Y499 contribute to the NADP(+) site.

The protein belongs to the ERG4/ERG24 family.

It localises to the membrane. The enzyme catalyses 4,4-dimethyl-5alpha-cholesta-8,24-dien-3beta-ol + NADP(+) = 4,4-dimethyl-5alpha-cholesta-8,14,24-trien-3beta-ol + NADPH + H(+). It functions in the pathway steroid biosynthesis; zymosterol biosynthesis; zymosterol from lanosterol: step 2/6. Functionally, reduces the C14=C15 double bond of 4,4-dimethyl-cholesta-8,14,24-trienol to produce 4,4-dimethyl-cholesta-8,24-dienol. The chain is Delta(14)-sterol reductase (ERG3) from Septoria lycopersici (Tomato leaf spot fungus).